The following is a 148-amino-acid chain: Probable histone H2B.2 (148 aa).

The segment covering 1 to 32 (MAPKGEKKPAEKKPAEEKKSTVAEKAPAEKKP) has biased composition (basic and acidic residues). The tract at residues 1 to 57 (MAPKGEKKPAEKKPAEEKKSTVAEKAPAEKKPKAGKKLPKEGGSAAGEKKKKRSKKS) is disordered. An N6-acetyllysine mark is found at K7, K36, and K37. K144 participates in a covalent cross-link: Glycyl lysine isopeptide (Lys-Gly) (interchain with G-Cter in ubiquitin).

This sequence belongs to the histone H2B family. In terms of assembly, the nucleosome is a histone octamer containing two molecules each of H2A, H2B, H3 and H4 assembled in one H3-H4 heterotetramer and two H2A-H2B heterodimers. The octamer wraps approximately 147 bp of DNA. Post-translationally, can be acetylated to form H2BK6ac, H2BK33ac and H2BK34ac. Monoubiquitinated to form H2BK143ub1; may give a specific tag for epigenetic transcriptional activation.

Its subcellular location is the nucleus. It localises to the chromosome. Core component of nucleosome. Nucleosomes wrap and compact DNA into chromatin, limiting DNA accessibility to the cellular machineries which require DNA as a template. Histones thereby play a central role in transcription regulation, DNA repair, DNA replication and chromosomal stability. DNA accessibility is regulated via a complex set of post-translational modifications of histones, also called histone code, and nucleosome remodeling. This is Probable histone H2B.2 from Medicago truncatula (Barrel medic).